The following is a 361-amino-acid chain: Chorismate synthase (361 aa).

NADP(+) is bound by residues R48 and R54. FMN-binding positions include 125–127 (RSS), 238–239 (NA), G278, 293–297 (KPTSS), and R319.

This sequence belongs to the chorismate synthase family. As to quaternary structure, homotetramer. Requires FMNH2 as cofactor.

The enzyme catalyses 5-O-(1-carboxyvinyl)-3-phosphoshikimate = chorismate + phosphate. It functions in the pathway metabolic intermediate biosynthesis; chorismate biosynthesis; chorismate from D-erythrose 4-phosphate and phosphoenolpyruvate: step 7/7. In terms of biological role, catalyzes the anti-1,4-elimination of the C-3 phosphate and the C-6 proR hydrogen from 5-enolpyruvylshikimate-3-phosphate (EPSP) to yield chorismate, which is the branch point compound that serves as the starting substrate for the three terminal pathways of aromatic amino acid biosynthesis. This reaction introduces a second double bond into the aromatic ring system. The polypeptide is Chorismate synthase (Vibrio vulnificus (strain CMCP6)).